Consider the following 398-residue polypeptide: UPF0261 protein RA0729 (398 aa).

Belongs to the UPF0261 family.

In Rhizobium meliloti (strain 1021) (Ensifer meliloti), this protein is UPF0261 protein RA0729.